The chain runs to 213 residues: Protein FAM177A1 (213 aa).

Met-1 bears the N-acetylmethionine mark. Ser-70 carries the phosphoserine modification. Thr-71 carries the phosphothreonine modification. Residues 136-173 (IDEYYRMKKEEEEEEEENRMSEEAEKQYQQNKLQTDSI) adopt a coiled-coil conformation. The tract at residues 147–175 (EEEEEENRMSEEAEKQYQQNKLQTDSIVQ) is disordered. Over residues 162–175 (QYQQNKLQTDSIVQ) the composition is skewed to polar residues.

It belongs to the FAM177 family.

This chain is Protein FAM177A1 (FAM177A1), found in Homo sapiens (Human).